Consider the following 70-residue polypeptide: MSQKSHKEKLEKPAYKCMKQYICEKVSAHENDVVCITVQRFFQVVDGHMKEVRPMSNQIGLQSGPVVEKN.

This is an uncharacterized protein from Schizosaccharomyces pombe (strain 972 / ATCC 24843) (Fission yeast).